The following is a 563-amino-acid chain: Ribulokinase (563 aa).

The protein belongs to the ribulokinase family.

The enzyme catalyses D-ribulose + ATP = D-ribulose 5-phosphate + ADP + H(+). It carries out the reaction L-ribulose + ATP = L-ribulose 5-phosphate + ADP + H(+). The protein operates within carbohydrate degradation; L-arabinose degradation via L-ribulose; D-xylulose 5-phosphate from L-arabinose (bacterial route): step 2/3. In Halalkalibacterium halodurans (strain ATCC BAA-125 / DSM 18197 / FERM 7344 / JCM 9153 / C-125) (Bacillus halodurans), this protein is Ribulokinase.